A 211-amino-acid polypeptide reads, in one-letter code: MIKRTICLVYPLFCLASPTWAEESPWTYRIGMTNVAFDASAKVYLNGQRVPGGSADASDNNALTFDFGYAINDQWNVRAIVGIPPTTKVTGAGTLPGIQLGKITYAPTVLTLNYNLPALGPVRPHIGAGVNYTRIFESRDANLKSFDADHAWSPALHVGADIDVNRGWFVSIDIRKLYLKTDASGYLGPQEAKARVTLDPLLTSIAIGRQF.

Its pathway is aromatic compound metabolism; naphthalene degradation. May be involved in the conversion of 2-hydroxy-4-(2'-oxo-3,5-cyclohexadienyl)-buta-2,4-dienoate to cis-O-hydroxybenzylidenepyruvate. DoxH and doxJ encode different enzymes that may have interchangeable functions. The chain is Dibenzothiophene metabolism operon protein DoxH (doxH) from Pseudomonas sp. (strain C18).